Reading from the N-terminus, the 106-residue chain is Small ribosomal subunit protein mS33 (106 aa).

S2 is subject to N-acetylserine. The interval 81 to 106 is disordered; it reads EQRRLKKLRGKGKPRKGEGKRATKKK. Residues 84–94 are compositionally biased toward basic residues; the sequence is RLKKLRGKGKP. The span at 95-106 shows a compositional bias: basic and acidic residues; sequence RKGEGKRATKKK.

The protein belongs to the mitochondrion-specific ribosomal protein mS33 family. As to quaternary structure, component of the mitochondrial ribosome small subunit (28S) which comprises a 12S rRNA and about 30 distinct proteins.

It localises to the mitochondrion. The protein is Small ribosomal subunit protein mS33 (Mrps33) of Mus musculus (Mouse).